A 133-amino-acid polypeptide reads, in one-letter code: Endoribonuclease YbeY (133 aa).

Residues His105, His109, and His115 each coordinate Zn(2+).

This sequence belongs to the endoribonuclease YbeY family. The cofactor is Zn(2+).

The protein resides in the cytoplasm. Single strand-specific metallo-endoribonuclease involved in late-stage 70S ribosome quality control and in maturation of the 3' terminus of the 16S rRNA. The sequence is that of Endoribonuclease YbeY from Lawsonia intracellularis (strain PHE/MN1-00).